The primary structure comprises 464 residues: MGRAWGLLVGLLGVVWLLRLGHGEERRPETAAQRCFCQVSGYLDDCTCDVETIDKFNNYRLFPRLQKLLESDYFRYYKVNLKKPCPFWNDINQCGRRDCAVKPCHSDEVPDGIKSASYKYSEEANRIEECEQAERLGAVDESLSEETQKAVLQWTKHDDSSDSFCEIDDIQSPDAEYVDLLLNPERYTGYKGPDAWRIWSVIYEENCFKPQTIQRPLASGRGKSKENTFYNWLEGLCVEKRAFYRLISGLHASINVHLSARYLLQDTWLEKKWGHNVTEFQQRFDGILTEGEGPRRLRNLYFLYLIELRALSKVLPFFERPDFQLFTGNKVQDAENKALLLEILHEIKSFPLHFDENSFFAGDKNEAHKLKEDFRLHFRNISRIMDCVGCFKCRLWGKLQTQGLGTALKILFSEKLIANMPESGPSYEFQLTRQEIVSLFNAFGRISTSVRELENFRHLLQNVH.

The N-terminal stretch at 1-23 (MGRAWGLLVGLLGVVWLLRLGHG) is a signal peptide. Cystine bridges form between cysteine 35-cysteine 48, cysteine 37-cysteine 46, cysteine 85-cysteine 387, cysteine 94-cysteine 99, cysteine 94-cysteine 130, cysteine 99-cysteine 104, cysteine 207-cysteine 237, and cysteine 390-cysteine 393. A phosphoserine mark is found at serine 106, serine 142, and serine 144. FAD contacts are provided by arginine 186, threonine 188, and tryptophan 199. 2 residues coordinate FAD: serine 248 and histidine 251. Asparagine 276 is a glycosylation site (N-linked (GlcNAc...) asparagine). FAD-binding residues include arginine 283 and arginine 296. Asparagine 380 carries an N-linked (GlcNAc...) asparagine glycan.

Belongs to the EROs family. As to quaternary structure, predominantly monomer. May function both as a monomer and a homodimer. Interacts with PDILT. Interacts with ERP44; the interaction results in retention of ERO1A in the endoplasmic reticulum. FAD is required as a cofactor. N-glycosylated. Post-translationally, the Cys-94/Cys-99 and Cys-390/Cys-393 disulfide bonds constitute the redox-active center. The Cys-94/Cys-99 disulfide bond may accept electron from P4HB and funnel them to the active site disulfide Cys-390/Cys-393. The regulatory Cys-99/Cys-104 disulfide bond stabilizes the other regulatory bond Cys-94/Cys-130. In terms of processing, phosphorylated on Ser-144 by FAM20C in the Golgi which increases its enzymatic activity. Phosphorylation is induced by lactation. It is also induced by hypoxia and reductive stress. Widely expressed (at protein level). In the mammary gland, expressed at higher levels in lactating mice than in virgin mice (at protein level).

The protein resides in the endoplasmic reticulum membrane. The protein localises to the golgi apparatus lumen. It is found in the secreted. It localises to the cell projection. Its subcellular location is the dendrite. Enzyme activity is tightly regulated to prevent the accumulation of reactive oxygen species in the endoplasmic reticulum. Reversibly down-regulated by the formation of disulfide bonds between the active site Cys-94 and Cys-130, and between Cys-99 and Cys-104. Glutathione may be required to regulate its activity in the endoplasmic reticulum. Oxidoreductase involved in disulfide bond formation in the endoplasmic reticulum. Efficiently reoxidizes P4HB/PDI, the enzyme catalyzing protein disulfide formation, in order to allow P4HB to sustain additional rounds of disulfide formation. Following P4HB reoxidation, passes its electrons to molecular oxygen via FAD, leading to the production of reactive oxygen species (ROS) in the cell. Required for the proper folding of immunoglobulins. Plays an important role in ER stress-induced, CHOP-dependent apoptosis by activating the inositol 1,4,5-trisphosphate receptor IP3R1. The sequence is that of ERO1-like protein alpha from Mus musculus (Mouse).